Reading from the N-terminus, the 185-residue chain is Elongation factor P (185 aa).

This sequence belongs to the elongation factor P family.

The protein resides in the cytoplasm. Its pathway is protein biosynthesis; polypeptide chain elongation. Involved in peptide bond synthesis. Stimulates efficient translation and peptide-bond synthesis on native or reconstituted 70S ribosomes in vitro. Probably functions indirectly by altering the affinity of the ribosome for aminoacyl-tRNA, thus increasing their reactivity as acceptors for peptidyl transferase. In Thermosipho africanus (strain TCF52B), this protein is Elongation factor P.